Here is a 294-residue protein sequence, read N- to C-terminus: 33 kDa chaperonin (294 aa).

Cystine bridges form between Cys-239-Cys-241 and Cys-272-Cys-275.

It belongs to the HSP33 family. Post-translationally, under oxidizing conditions two disulfide bonds are formed involving the reactive cysteines. Under reducing conditions zinc is bound to the reactive cysteines and the protein is inactive.

The protein localises to the cytoplasm. In terms of biological role, redox regulated molecular chaperone. Protects both thermally unfolding and oxidatively damaged proteins from irreversible aggregation. Plays an important role in the bacterial defense system toward oxidative stress. This chain is 33 kDa chaperonin, found in Listeria monocytogenes serovar 1/2a (strain ATCC BAA-679 / EGD-e).